We begin with the raw amino-acid sequence, 233 residues long: C-type lectin domain-containing protein 87 (233 aa).

The N-terminal stretch at 1 to 19 (MRFCLLVAFILPGLFLVHA) is a signal peptide. O-linked (Xyl...) (chondroitin sulfate) serine glycosylation occurs at S31. N-linked (GlcNAc...) asparagine glycosylation is present at N81. Residues 93-223 (FADSCYWIEK…CTYMLYSICE (131 aa)) enclose the C-type lectin domain. Cystine bridges form between C114–C222 and C193–C214. N225 carries N-linked (GlcNAc...) asparagine glycosylation.

This Caenorhabditis elegans protein is C-type lectin domain-containing protein 87.